An 805-amino-acid polypeptide reads, in one-letter code: MDAATPGNGGIISDVVFVIEGTANLGPYFESLRKHYLLPAIEYFNGGPPAETDFGGDYGGTQYSLVVFNTVDCAPESYVQCHAPTSSAYEFVQWLDSIRFMGGGGESCSLIAEGLSTALQLFDDFKKMREQIGQTHKVCILICNSPPYLLPAVESTTYSGYTTENLVQKIGERGIHFSVISPRKLPALRTLFEKAMPVGLIEPQPKDYSQDPRHMILVRGMVLPVGGATSVPGVIPPKQPISQPPLPVVPPQIANAPSHQLPPVQPPYMQVPQQNTLTTAHAAAQSAVEAAKNQKNNLPNRFPLPNLNQMPPTSAVGTPFNQPPPPAMPQNTSVPKMVTSTASLMTPASQPSLVTTVTTGPGPAPVQLQQQGAQQQPVPPSMPITGAAGGVQAPQPSQPQIGTAQLPCTQTPVNGNKLLAWSGVLEWQEKPRSVSVDNNAKLTRSLPCQVYVNPGENLKTDQWPQKLIMQLIPQQLLTTLGPLFRNSRMVQFHFTNKDLESLKGLYRIMGSGFQAGCVHFPHTTPCEVRVLMLLYSSKKKIFMGLIPNDQSGFVNGIRQVITNHKQVQMQKIDQQRNMGAGQAVGTGNVPANTQAFLQKQPGALPVAQAVPQQMQGQQVAPGMPSISQVTMMDEQQRTQNLLHIRVQQPQQAASQAPPQATQTTVQAPGQPQNPQPGAMLRPQNPGANPQLRNLLLSQQPPQTSVPQTQQPLHHMQQAAQGMLPHQAMGQQMQHQAPGQQQLQLPGQTLMHQAPAQQWGNQMQQRAPIPGTLMMSAGPRGPVPQQGLQQVQAQSVMEDDILMDLI.

Disordered regions lie at residues 308-332 (NQMPPTSAVGTPFNQPPPPAMPQNT) and 647-691 (QQPQ…NPQL). Low complexity predominate over residues 647–678 (QQPQQAASQAPPQATQTTVQAPGQPQNPQPGA). An LXXLL motif motif is present at residues 691 to 695 (LRNLL).

This sequence belongs to the Mediator complex subunit 25 family. In terms of assembly, component of the Mediator complex.

The protein localises to the nucleus. Its function is as follows. Component of the Mediator complex, a coactivator involved in the regulated transcription of nearly all RNA polymerase II-dependent genes. Mediator functions as a bridge to convey information from gene-specific regulatory proteins to the basal RNA polymerase II transcription machinery. Mediator is recruited to promoters by direct interactions with regulatory proteins and serves as a scaffold for the assembly of a functional preinitiation complex with RNA polymerase II and the general transcription factors. This chain is Mediator of RNA polymerase II transcription subunit 25 (med25), found in Xenopus tropicalis (Western clawed frog).